Consider the following 403-residue polypeptide: Nucleoporin nup44 (403 aa).

2 stretches are compositionally biased toward polar residues: residues 1–31 (MAFS…TTKP) and 67–124 (FGKT…DETN). Positions 1–124 (MAFSFGQQGS…NPTKPVDETN (124 aa)) are disordered.

The protein localises to the cytoplasm. It is found in the nucleus. In terms of biological role, functions as a component of the nuclear pore complex (NPC). NPC components, collectively referred to as nucleoporins (NUPs), can play the role of both NPC structural components and of docking or interaction partners for transiently associated nuclear transport factors. Active directional transport is assured by both, a Phe-Gly (FG) repeat affinity gradient for these transport factors across the NPC and a transport cofactor concentration gradient across the nuclear envelope. In Schizosaccharomyces pombe (strain 972 / ATCC 24843) (Fission yeast), this protein is Nucleoporin nup44 (nup44).